Reading from the N-terminus, the 635-residue chain is 5-aminolevulinate synthase, non-specific, mitochondrial (635 aa).

The transit peptide at 1 to 56 (MEAVVRRCPFLARVSQAFLQKAGPSLLFYAQHCPKMMEAAPPAAARGLATSASRGQ) directs the protein to the mitochondrion. The span at 44–66 (AARGLATSASRGQQVEETPAAQP) shows a compositional bias: low complexity. A disordered region spans residues 44–94 (AARGLATSASRGQQVEETPAAQPEAKKAKEVAQQNTDGSQPPAGHPPAAAV). The substrate site is built by Arg212, Ser329, and Lys348. Pyridoxal 5'-phosphate is bound by residues Ser381, His409, and Thr437. Lys440 is a catalytic residue. Lys440 carries the N6-(pyridoxal phosphate)lysine modification. Residues Thr469 and Thr470 each contribute to the pyridoxal 5'-phosphate site. Residue Thr557 participates in substrate binding.

It belongs to the class-II pyridoxal-phosphate-dependent aminotransferase family. Homodimer. The cofactor is pyridoxal 5'-phosphate. As to expression, ubiquitous.

Its subcellular location is the mitochondrion inner membrane. The catalysed reaction is succinyl-CoA + glycine + H(+) = 5-aminolevulinate + CO2 + CoA. It participates in porphyrin-containing compound metabolism; protoporphyrin-IX biosynthesis; 5-aminolevulinate from glycine: step 1/1. In terms of biological role, catalyzes the pyridoxal 5'-phosphate (PLP)-dependent condensation of succinyl-CoA and glycine to form aminolevulinic acid (ALA), with CoA and CO2 as by-products. This chain is 5-aminolevulinate synthase, non-specific, mitochondrial (ALAS1), found in Gallus gallus (Chicken).